A 186-amino-acid polypeptide reads, in one-letter code: Trafficking protein particle complex subunit 3 (186 aa).

This sequence belongs to the TRAPP small subunits family. BET3 subfamily. In terms of assembly, homodimer. Part of the multisubunit TRAPP (transport protein particle) complex.

It localises to the golgi apparatus. The protein localises to the cis-Golgi network. The protein resides in the endoplasmic reticulum. May play a role in vesicular transport from endoplasmic reticulum to Golgi. The chain is Trafficking protein particle complex subunit 3 (trappc3) from Dictyostelium discoideum (Social amoeba).